The sequence spans 363 residues: Proline/serine-rich coiled-coil protein 1 (363 aa).

A Phosphoserine modification is found at Ser22. Copy 1 of the repeat occupies 38 to 41 (PEKP). The disordered stretch occupies residues 39–67 (EKPLRRGLSHRSDPNAVAPAPQGVRLSLG). Position 42 is a phosphoserine (Leu42). Gly45 carries the post-translational modification Phosphothreonine. 6 positions are modified to phosphoserine: Ser47, Ser65, Ser70, Ser98, Ser122, and Ser140. The stretch at 68–71 (PLSP) is repeat 2. The stretch at 70–94 (SPEKLEEILDEANRLAAQLEQCALQ) forms a coiled coil. Residues 95–363 (DRESAGEGLG…RKVAVPGPTR (269 aa)) are disordered. The 4 X 4 AA repeats of P-X-X-P stretch occupies residues 103–246 (LGPRRVKPSP…HPSPPGPPTP (144 aa)). Positions 112-124 (PRRETFVLKDSPV) are enriched in basic and acidic residues. Residues 133–148 (SLTRSTPSPSSLTPRL) show a composition bias toward low complexity. Thr145 is modified (phosphothreonine). Phosphoserine occurs at positions 186 and 190. A compositionally biased stretch (polar residues) spans 186–196 (SPASSPLTRST). A compositionally biased stretch (low complexity) spans 197-210 (PPVRGRAGPSGRAA). The residue at position 212 (Ser212) is a Phosphoserine. Thr215 carries the post-translational modification Phosphothreonine. Repeat copies occupy residues 238–241 (PSPP) and 243–246 (PPTP).

This sequence belongs to the PSRC1 family. Interacts with APC2. Interacts with KIF2A. Interacts with ANKRD53; recruits ANKRD53 to the spindle during mitosis. Phosphorylated during mitosis. As to expression, widely expressed in adult and fetal tissues, with highest expression in the adult brain and fetal thymus. Not detected in adult skeletal muscle.

The protein resides in the cytoplasm. The protein localises to the cytoskeleton. It localises to the spindle. Its subcellular location is the spindle pole. Required for normal progression through mitosis. Required for normal congress of chromosomes at the metaphase plate, and for normal rate of chromosomal segregation during anaphase. Plays a role in the regulation of mitotic spindle dynamics. Increases the rate of turnover of microtubules on metaphase spindles, and contributes to the generation of normal tension across sister kinetochores. Recruits KIF2A and ANKRD53 to the mitotic spindle and spindle poles. May participate in p53/TP53-regulated growth suppression. The chain is Proline/serine-rich coiled-coil protein 1 (PSRC1) from Homo sapiens (Human).